The primary structure comprises 147 residues: Hemoglobin subunit delta (147 aa).

Residues 3 to 147 form the Globin domain; the sequence is HLTPEEKAAV…VATALAHKYH (145 aa). Residues H64 and H93 each coordinate heme b.

Belongs to the globin family. Heterotetramer of two delta chains and two alpha chains. As to expression, red blood cells.

This is Hemoglobin subunit delta (HBD) from Ateles geoffroyi (Black-handed spider monkey).